A 183-amino-acid chain; its full sequence is Photosystem I assembly protein Ycf4 (183 aa).

The next 2 helical transmembrane spans lie at 21 to 43 (YIWG…SSYL) and 63 to 85 (LVMC…LILW).

The protein belongs to the Ycf4 family.

It localises to the plastid. Its subcellular location is the chloroplast thylakoid membrane. Functionally, seems to be required for the assembly of the photosystem I complex. This is Photosystem I assembly protein Ycf4 from Chlorella vulgaris (Green alga).